A 208-amino-acid chain; its full sequence is Peroxiredoxin (208 aa).

The Thioredoxin domain occupies 2 to 156; it reads PLLGDDFPQL…IVRAVKALQT (155 aa). The active-site Cysteine sulfenic acid (-SOH) intermediate is the Cys-44. A substrate-binding site is contributed by Arg-119.

Belongs to the peroxiredoxin family. Prx6 subfamily. As to quaternary structure, homodecamer. Pentamer of dimers that assemble into a ring structure.

It localises to the cytoplasm. The enzyme catalyses a hydroperoxide + [thioredoxin]-dithiol = an alcohol + [thioredoxin]-disulfide + H2O. In terms of biological role, thiol-specific peroxidase that catalyzes the reduction of hydrogen peroxide and organic hydroperoxides to water and alcohols, respectively. Plays a role in cell protection against oxidative stress by detoxifying peroxides. The polypeptide is Peroxiredoxin (Treponema denticola (strain ATCC 35405 / DSM 14222 / CIP 103919 / JCM 8153 / KCTC 15104)).